A 640-amino-acid polypeptide reads, in one-letter code: EF-hand domain-containing protein 1 (640 aa).

Positions 1-45 (MVSNPVHGLPFLPGTSFKDSTKTAFHRSQTLSYRNGYAIVRRPTV) are required for its localization in the mitotic spindle and interaction with alpha-tubulin. DM10 domains follow at residues 93 to 198 (DKKV…ESQG), 239 to 359 (DKQV…KEKF), and 416 to 520 (DNKV…ESNA). The segment at 535–554 (VRKREAPAPEAESKQTEKDP) is disordered. Over residues 538–554 (REAPAPEAESKQTEKDP) the composition is skewed to basic and acidic residues. One can recognise an EF-hand domain in the interval 574–609 (SCKDNIREAFQIYDKEASGYVDRDMFFKICESLNVP).

Microtubule inner protein component of sperm flagellar doublet microtubules. Interacts with the C-terminus of CACNA1E. Interacts with alpha-tubulin. In terms of tissue distribution, widely expressed. Not detected in lymphocytes.

The protein localises to the cytoplasm. Its subcellular location is the cytoskeleton. It localises to the cilium axoneme. It is found in the flagellum axoneme. The protein resides in the microtubule organizing center. The protein localises to the centrosome. Its subcellular location is the spindle. It localises to the spindle pole. Microtubule inner protein (MIP) part of the dynein-decorated doublet microtubules (DMTs) in cilia axoneme, which is required for motile cilia beating. Microtubule-associated protein which regulates cell division and neuronal migration during cortical development. Necessary for radial and tangential cell migration during brain development, possibly acting as a regulator of cell morphology and process formation during migration. May enhance calcium influx through CACNA1E and stimulate programmed cell death. The sequence is that of EF-hand domain-containing protein 1 from Homo sapiens (Human).